Reading from the N-terminus, the 108-residue chain is Cytochrome c6 (108 aa).

The N-terminal stretch at 1–23 (MRLLFAFFIICHIFTNNVQLTFA) is a signal peptide. Heme c-binding residues include Cys37, Cys40, His41, and Met81.

The protein belongs to the cytochrome c family. PetJ subfamily. Monomer. Binds 1 heme c group covalently per subunit.

It is found in the plastid. It localises to the chloroplast thylakoid lumen. Functions as an electron carrier between membrane-bound cytochrome b6-f and photosystem I in oxygenic photosynthesis. This Gracilaria tenuistipitata var. liui (Red alga) protein is Cytochrome c6.